A 230-amino-acid polypeptide reads, in one-letter code: NADH dehydrogenase [ubiquinone] iron-sulfur protein 8, mitochondrial (230 aa).

The transit peptide at 1-42 (MAAILARKSLSALRSRQLVLAGQAWQQGANTSNGTLLGTRTF) directs the protein to the mitochondrion. 2 4Fe-4S ferredoxin-type domains span residues 122-151 (RRYPTGEERCIACKLCEAICPAQAITIEAE) and 161-190 (TRYDIDMTKCIYCGFCQEACPVDAIVEGPN). Positions 131, 134, 137, 141, 170, 173, 176, and 180 each coordinate [4Fe-4S] cluster.

It belongs to the complex I 23 kDa subunit family. As to quaternary structure, complex I is composed of about 45 different subunits. This is a component of the iron-sulfur (IP) fragment of the enzyme. [4Fe-4S] cluster is required as a cofactor.

The protein resides in the mitochondrion. The enzyme catalyses a ubiquinone + NADH + 5 H(+)(in) = a ubiquinol + NAD(+) + 4 H(+)(out). Core subunit of the mitochondrial membrane respiratory chain NADH dehydrogenase (Complex I) that is believed to belong to the minimal assembly required for catalysis. Complex I functions in the transfer of electrons from NADH to the respiratory chain. The immediate electron acceptor for the enzyme is believed to be ubiquinone. May donate electrons to ubiquinone. This is NADH dehydrogenase [ubiquinone] iron-sulfur protein 8, mitochondrial from Nicotiana tabacum (Common tobacco).